The sequence spans 656 residues: Translation factor GUF1 homolog, mitochondrial (656 aa).

In terms of domain architecture, tr-type G spans 55 to 236 (QRIRNFSIIA…EIVRRLPPPD (182 aa)). Residues 64-71 (AHVDHGKS), 129-133 (DTPGH), and 183-186 (NKID) contribute to the GTP site.

This sequence belongs to the TRAFAC class translation factor GTPase superfamily. Classic translation factor GTPase family. LepA subfamily.

It localises to the mitochondrion inner membrane. It catalyses the reaction GTP + H2O = GDP + phosphate + H(+). In terms of biological role, promotes mitochondrial protein synthesis. May act as a fidelity factor of the translation reaction, by catalyzing a one-codon backward translocation of tRNAs on improperly translocated ribosomes. Binds to mitochondrial ribosomes in a GTP-dependent manner. In Aedes aegypti (Yellowfever mosquito), this protein is Translation factor GUF1 homolog, mitochondrial.